Reading from the N-terminus, the 518-residue chain is MGLLKRAARAWKLAGQADSPPAQPARKEPTLTRTFKMARQTRLNNSWTGRSNAGDADHVIYKDHETLRQRAREQSINSGYAKRFYRLLRQNVIGPHGITMRSKALKADGYADDDMRRVIEQEFKKWSKRGNCDVTGRYSFVTFMWLWIDTLARDGEVMVRILRNWPNRWGFALQIIESDLLDTTLNTWLSNGNRVRMGVEIDEWEKPIAYWLKRSHPGDNFERPAEQEYQRIPADELRLTFDPWRPHQSRGFTWTHAGANDLHHVEEYAGAELIAAEQGAKLTGFYEQDAEWVDPPGDEDSDDADQGVIIEEIEAGSARLLPYGVTFKPYDNKHPSTNFAPFTKAAVRRIAGAFGPSYNRLAHDLEGVSFSSLRSGEIDERDFYKCIQQFAISELLEWVGEVWMECSMLKGVLKIPPRAWDRLTPIEWLPRGWDWVDPKKDSDAAKTGIETLTDSVSDIMRRKGRDPDDVYNQISEDIRRFKRLGIPNPYGKALQANGVTHVEPDEEDDDEPNATGTD.

The disordered stretch occupies residues 492 to 518 (KALQANGVTHVEPDEEDDDEPNATGTD).

This sequence belongs to the siphoviridae portal protein family. Homododecamer. Interacts with the terminase complex composed of two small and one large terminase subunits.

The protein localises to the virion. Its function is as follows. Forms the portal vertex of the capsid. This portal plays critical roles in head assembly, genome packaging, neck/tail attachment, and genome ejection. The portal protein multimerizes as a single ring-shaped homododecamer arranged around a central channel. Binds to the terminase subunits to form the packaging machine. This chain is Probable portal protein, found in Vreelandella aquamarina (Bacteriophage phiHAP-1).